The chain runs to 714 residues: Polyribonucleotide nucleotidyltransferase (714 aa).

D488 and D494 together coordinate Mg(2+). The KH domain maps to 555 to 614 (PRIEVMNIPTDKIRDVIGSGGKVIREIVEKTGAKINIEDDGTVKIASSNGKEIEAAKKWI). The 69-residue stretch at 624–692 (GEIYEGTVVK…ERGKVRLSMK (69 aa)) folds into the S1 motif domain.

Belongs to the polyribonucleotide nucleotidyltransferase family. Mg(2+) serves as cofactor.

It localises to the cytoplasm. It catalyses the reaction RNA(n+1) + phosphate = RNA(n) + a ribonucleoside 5'-diphosphate. Involved in mRNA degradation. Catalyzes the phosphorolysis of single-stranded polyribonucleotides processively in the 3'- to 5'-direction. The protein is Polyribonucleotide nucleotidyltransferase of Brucella abortus biovar 1 (strain 9-941).